The sequence spans 374 residues: MEPLYEEILTQGGTIVKPYYWLSLSLGCTNCPYHIRTGEEARVPYTEFHQTFGFPWSTYPQTKHLTFYELRSSSKNLIQKGLASNCTGSHNHPEAMLFEKNGYLDAVIFHNSNIRHIILYSNNSPCNEAKHCCISKMYNFLMNYPEVTLSVFFSQLYHTEKQFPTSAWNRKALQSLASLWPQVTLSPICGGLWHAILEKFVSNISGSTVPQPFIAGRILADRYNTYEINSIIAAKPYFTDGLLSRQKENQNREAWAAFEKHPLGSAAPAQRQPTRGQDPRTPAVLMLVSNRDLPPIHVGSTPQKPRTVVRHLNMLQLSSFKVKDVKKPPSGRPVEEVEVMKESARSQKANKKNRSQWKKQTLVIKPRICRLLER.

A CMP/dCMP-type deaminase domain is found at 60-176 (PQTKHLTFYE…AWNRKALQSL (117 aa)). His-92 is a Zn(2+) binding site. Glu-94 acts as the Proton donor in catalysis. Residues Cys-126 and Cys-133 each coordinate Zn(2+). The segment at 259 to 280 (EKHPLGSAAPAQRQPTRGQDPR) is disordered.

It belongs to the cytidine and deoxycytidylate deaminase family. The cofactor is Zn(2+). Predominantly expressed in testis.

Its function is as follows. Putative C to U editing enzyme whose physiological substrate is not yet known. The polypeptide is Putative C-&gt;U-editing enzyme APOBEC-4 (Apobec4) (Mus musculus (Mouse)).